Reading from the N-terminus, the 473-residue chain is Chromosomal replication initiator protein DnaA (473 aa).

The tract at residues 1–73 (MTNIEQDRWS…LSCWQAEMPQ (73 aa)) is domain I, interacts with DnaA modulators. The domain II stretch occupies residues 73-129 (QVHRVDLTVRTAMRCAAPAKDAPAHAEPRRDDGRPAPELRATAIAPVSATHEALGGS). The domain III, AAA+ region stretch occupies residues 130–352 (PLDPRLTFGS…GAINRLLAHS (223 aa)). Residues Gly177, Gly179, Lys180, and Thr181 each contribute to the ATP site. The interval 353-473 (KLNAQPVTLE…VELLKRQLQE (121 aa)) is domain IV, binds dsDNA.

The protein belongs to the DnaA family. In terms of assembly, oligomerizes as a right-handed, spiral filament on DNA at oriC.

The protein localises to the cytoplasm. Functionally, plays an essential role in the initiation and regulation of chromosomal replication. ATP-DnaA binds to the origin of replication (oriC) to initiate formation of the DNA replication initiation complex once per cell cycle. Binds the DnaA box (a 9 base pair repeat at the origin) and separates the double-stranded (ds)DNA. Forms a right-handed helical filament on oriC DNA; dsDNA binds to the exterior of the filament while single-stranded (ss)DNA is stabiized in the filament's interior. The ATP-DnaA-oriC complex binds and stabilizes one strand of the AT-rich DNA unwinding element (DUE), permitting loading of DNA polymerase. After initiation quickly degrades to an ADP-DnaA complex that is not apt for DNA replication. Binds acidic phospholipids. In Rhodopseudomonas palustris (strain BisB18), this protein is Chromosomal replication initiator protein DnaA.